A 485-amino-acid chain; its full sequence is Keratin, type I cytoskeletal 14 (485 aa).

The segment covering 1–15 has biased composition (polar residues); the sequence is MATCSRQFTSSSSMK. A disordered region spans residues 1-21; that stretch reads MATCSRQFTSSSSMKGSCGIG. The interval 1–121 is head; the sequence is MATCSRQFTS…GLGDGLLVGS (121 aa). Residues 122 to 157 form a coil 1A region; that stretch reads EKVTMQNLNDRLATYLDKVRALEEANSDLEVKIRDW. The 312-residue stretch at 122–433 folds into the IF rod domain; it reads EKVTMQNLND…RLLEGEDAHL (312 aa). The interval 158 to 175 is linker 1; it reads YQRQRPTEIKDYSPYFKT. Residues 176–267 form a coil 1B region; the sequence is IEDLKSKILA…KNHEEEMASM (92 aa). A linker 12 region spans residues 268 to 290; sequence RGQVGGDVNVEMDAAPGVDLSRI. The coil 2 stretch occupies residues 291-429; sequence LNEMRDQYEK…ATYRRLLEGE (139 aa). Residues 430 to 485 are tail; it reads DAHLSSAQFSSSSQFSSGSQSSRDVTSTNRQIRTKVMDVHDGKVVSTHEQVLRTKN. Positions 432–485 are interaction with Type I keratins and keratin filaments; sequence HLSSAQFSSSSQFSSGSQSSRDVTSTNRQIRTKVMDVHDGKVVSTHEQVLRTKN. The segment covering 437 to 451 has biased composition (low complexity); the sequence is QFSSSSQFSSGSQSS. The tract at residues 437–458 is disordered; that stretch reads QFSSSSQFSSGSQSSRDVTSTN. Ser448 is modified (phosphoserine).

This sequence belongs to the intermediate filament family. Heterotetramer of two type I and two type II keratins. Forms a disulfide-linked heterodimer (via 2B domains) with KRT5 (via 2B domains). Forms a heterodimer with KRT1; the interaction is more abundant in the absence of KRT5. Interacts with TRADD and with keratin filaments. Associates with other type I keratins. Interacts with EPPK1. Interacts with KLHL24. Interacts with PKP1 (via N-terminus) and PKP2. Post-translationally, a disulfide bond is formed between rather than within filaments and promotes the formation of a keratin filament cage around the nucleus. Ubiquitinated by the BCR(KLHL24) E3 ubiquitin ligase complex. Expressed in most cells of squamous cell carcinomas, in spinous and suprabasal cells around the branching papillary region of papillomas, and weakly in a few proliferative cells of hyperplastic tissue.

It localises to the cytoplasm. The protein localises to the nucleus. The nonhelical tail domain is involved in promoting KRT5-KRT14 filaments to self-organize into large bundles and enhances the mechanical properties involved in resilience of keratin intermediate filaments in vitro. This chain is Keratin, type I cytoskeletal 14 (Krt14), found in Rattus norvegicus (Rat).